A 710-amino-acid chain; its full sequence is U3 small nucleolar RNA-associated protein 4 (710 aa).

WD repeat units follow at residues 11–59, 64–105, 108–147, 154–192, 199–241, 290–327, 328–365, 488–527, and 529–569; these read YTPS…CLKT, GVDR…PLVN, SNAGAIWSIAICDETKTLAVGCDDGSCVLFDISGGPGVIE, RQTSRILSLDFQTKDHLVGGCADGVIKVWDLSTPNSAII, RARK…LSQS, FHSHDVRCMAVFECKSLDVLISGGMDMMLAVIPVRQFN, RKNHRMISAVPQRPRMAVAPKARLFMLWNDHEVLLWRI, SMCDGICSIAVSSDGDYFAVADTVGNIFCYSLSNLTYSEL, and RVNT…LSEW.

In terms of assembly, component of the ribosomal small subunit (SSU) processome.

It is found in the nucleus. The protein localises to the nucleolus. Involved in nucleolar processing of pre-18S ribosomal RNA. Required for optimal pre-ribosomal RNA transcription by RNA polymerase I together with a subset of U3 proteins required for transcription (t-UTPs). This chain is U3 small nucleolar RNA-associated protein 4 (utp4), found in Schizosaccharomyces pombe (strain 972 / ATCC 24843) (Fission yeast).